A 72-amino-acid polypeptide reads, in one-letter code: Putative snRNP Sm-like protein (72 aa).

Residues 4–72 (RPLDILNNAL…RGDNVVYVSP (69 aa)) form the Sm domain.

The protein belongs to the snRNP Sm proteins family.

In Methanosarcina barkeri (strain Fusaro / DSM 804), this protein is Putative snRNP Sm-like protein.